The following is a 242-amino-acid chain: ATP synthase subunit a (242 aa).

Helical transmembrane passes span 29-49 (SSIY…LAFY), 84-104 (FIPL…LGMT), 114-134 (IIVT…VGFV), 140-160 (FLTL…MIVI), 181-201 (MAGH…MIYL), and 203-223 (FLPI…AILQ).

Belongs to the ATPase A chain family. In terms of assembly, F-type ATPases have 2 components, CF(1) - the catalytic core - and CF(0) - the membrane proton channel. CF(1) has five subunits: alpha(3), beta(3), gamma(1), delta(1), epsilon(1). CF(0) has three main subunits: a(1), b(2) and c(9-12). The alpha and beta chains form an alternating ring which encloses part of the gamma chain. CF(1) is attached to CF(0) by a central stalk formed by the gamma and epsilon chains, while a peripheral stalk is formed by the delta and b chains.

It is found in the cell inner membrane. Key component of the proton channel; it plays a direct role in the translocation of protons across the membrane. This Rickettsia conorii (strain ATCC VR-613 / Malish 7) protein is ATP synthase subunit a.